Here is a 505-residue protein sequence, read N- to C-terminus: Cytochrome P450 76A2 (505 aa).

Cys-448 serves as a coordination point for heme.

This sequence belongs to the cytochrome P450 family. Heme serves as cofactor.

In Solanum melongena (Eggplant), this protein is Cytochrome P450 76A2 (CYP76A2).